Reading from the N-terminus, the 297-residue chain is Ribosomal protein L11 methyltransferase (297 aa).

The S-adenosyl-L-methionine site is built by Thr152, Gly173, Asp195, and Asn234.

It belongs to the methyltransferase superfamily. PrmA family.

Its subcellular location is the cytoplasm. It carries out the reaction L-lysyl-[protein] + 3 S-adenosyl-L-methionine = N(6),N(6),N(6)-trimethyl-L-lysyl-[protein] + 3 S-adenosyl-L-homocysteine + 3 H(+). Its function is as follows. Methylates ribosomal protein L11. This chain is Ribosomal protein L11 methyltransferase, found in Cupriavidus taiwanensis (strain DSM 17343 / BCRC 17206 / CCUG 44338 / CIP 107171 / LMG 19424 / R1) (Ralstonia taiwanensis (strain LMG 19424)).